The chain runs to 88 residues: Acyl-CoA-binding domain-containing protein 7 (88 aa).

Residues 3-88 enclose the ACB domain; it reads LQADFDKAAK…AKELIEKYGI (86 aa). An acyl-CoA is bound by residues Arg-15, 30 to 34, Lys-56, and Tyr-75; that span reads YGLYK.

Belongs to the ACBD7 family.

Its function is as follows. Binds medium- and long-chain acyl-CoA esters. The chain is Acyl-CoA-binding domain-containing protein 7 (ACBD7) from Bos taurus (Bovine).